The chain runs to 460 residues: Muscarinic acetylcholine receptor M1 (460 aa).

Over methionine 1–proline 22 the chain is Extracellular. 2 N-linked (GlcNAc...) asparagine glycosylation sites follow: asparagine 2 and asparagine 12. Residues tryptophan 23–isoleucine 48 traverse the membrane as a helical segment. The Cytoplasmic segment spans residues serine 49–tyrosine 62. The helical transmembrane segment at phenylalanine 63–threonine 84 threads the bilayer. At tyrosine 85–threonine 95 the chain is on the extracellular side. A helical transmembrane segment spans residues leucine 96 to phenylalanine 121. A disulfide bridge links cysteine 98 with cysteine 178. Over aspartate 122–alanine 142 the chain is Cytoplasmic. A helical membrane pass occupies residues alanine 143–tryptophan 164. Residues glutamine 165–glutamine 185 are Extracellular-facing. A helical transmembrane segment spans residues proline 186–tryptophan 209. At arginine 210 to threonine 366 the chain is on the cytoplasmic side. Disordered stretches follow at residues leucine 225–proline 256, tryptophan 274–glycine 297, and glutamate 310–lysine 351. Threonine 230 carries the phosphothreonine modification. Residues serine 238–glycine 247 show a composition bias toward low complexity. Over residues arginine 328 to proline 343 the composition is skewed to basic residues. Residues leucine 367 to phenylalanine 390 traverse the membrane as a helical segment. The Extracellular portion of the chain corresponds to cysteine 391 to glutamate 397. Residues threonine 398 to leucine 420 form a helical membrane-spanning segment. The Cytoplasmic segment spans residues cysteine 421–cysteine 460. Threonine 428 is modified (phosphothreonine). A Phosphoserine modification is found at serine 451. At threonine 455 the chain carries Phosphothreonine. Residue serine 457 is modified to Phosphoserine.

The protein belongs to the G-protein coupled receptor 1 family. Muscarinic acetylcholine receptor subfamily. CHRM1 sub-subfamily. As to quaternary structure, interacts with GPRASP2. Interacts with TMEM147.

The protein localises to the cell membrane. It localises to the postsynaptic cell membrane. Its function is as follows. The muscarinic acetylcholine receptor mediates various cellular responses, including inhibition of adenylate cyclase, breakdown of phosphoinositides and modulation of potassium channels through the action of G proteins. Primary transducing effect is Pi turnover. In Homo sapiens (Human), this protein is Muscarinic acetylcholine receptor M1 (CHRM1).